A 123-amino-acid polypeptide reads, in one-letter code: Small ribosomal subunit protein uS12 (123 aa).

Residues 1–25 (MPTINQLIRKRRKSSLARKKSPALQ) form a disordered region. Residues 8 to 21 (IRKRRKSSLARKKS) are compositionally biased toward basic residues. Aspartate 89 carries the 3-methylthioaspartic acid modification.

This sequence belongs to the universal ribosomal protein uS12 family. Part of the 30S ribosomal subunit. Contacts proteins S8 and S17. May interact with IF1 in the 30S initiation complex.

With S4 and S5 plays an important role in translational accuracy. Functionally, interacts with and stabilizes bases of the 16S rRNA that are involved in tRNA selection in the A site and with the mRNA backbone. Located at the interface of the 30S and 50S subunits, it traverses the body of the 30S subunit contacting proteins on the other side and probably holding the rRNA structure together. The combined cluster of proteins S8, S12 and S17 appears to hold together the shoulder and platform of the 30S subunit. The sequence is that of Small ribosomal subunit protein uS12 from Chlamydia pneumoniae (Chlamydophila pneumoniae).